Reading from the N-terminus, the 536-residue chain is Phosphoenolpyruvate carboxykinase (ATP) (536 aa).

Arg-61, Tyr-195, and Lys-201 together coordinate substrate. Residues Lys-201, His-220, and 236–244 contribute to the ATP site; that span reads GLSGTGKTT. Mn(2+) is bound by residues Lys-201 and His-220. A Mn(2+)-binding site is contributed by Asp-257. ATP is bound by residues Glu-285, Arg-322, and Thr-447. Residue Arg-322 coordinates substrate.

This sequence belongs to the phosphoenolpyruvate carboxykinase (ATP) family. It depends on Mn(2+) as a cofactor.

Its subcellular location is the cytoplasm. It catalyses the reaction oxaloacetate + ATP = phosphoenolpyruvate + ADP + CO2. It participates in carbohydrate biosynthesis; gluconeogenesis. Involved in the gluconeogenesis. Catalyzes the conversion of oxaloacetate (OAA) to phosphoenolpyruvate (PEP) through direct phosphoryl transfer between the nucleoside triphosphate and OAA. This Sinorhizobium medicae (strain WSM419) (Ensifer medicae) protein is Phosphoenolpyruvate carboxykinase (ATP).